A 445-amino-acid chain; its full sequence is tRNA-2-methylthio-N(6)-dimethylallyladenosine synthase (445 aa).

The MTTase N-terminal domain occupies 3–120 (RKLFIQTHGC…LPGLITQAAS (118 aa)). 6 residues coordinate [4Fe-4S] cluster: Cys-12, Cys-49, Cys-83, Cys-157, Cys-161, and Cys-164. The Radical SAM core domain maps to 143–375 (SVDGPSAFVS…QQRINQNVQD (233 aa)). The 65-residue stretch at 378-442 (RKMVGSTQRI…SNSLLGTDPR (65 aa)) folds into the TRAM domain.

Belongs to the methylthiotransferase family. MiaB subfamily. Monomer. [4Fe-4S] cluster serves as cofactor.

It localises to the cytoplasm. It carries out the reaction N(6)-dimethylallyladenosine(37) in tRNA + (sulfur carrier)-SH + AH2 + 2 S-adenosyl-L-methionine = 2-methylsulfanyl-N(6)-dimethylallyladenosine(37) in tRNA + (sulfur carrier)-H + 5'-deoxyadenosine + L-methionine + A + S-adenosyl-L-homocysteine + 2 H(+). Its function is as follows. Catalyzes the methylthiolation of N6-(dimethylallyl)adenosine (i(6)A), leading to the formation of 2-methylthio-N6-(dimethylallyl)adenosine (ms(2)i(6)A) at position 37 in tRNAs that read codons beginning with uridine. The sequence is that of tRNA-2-methylthio-N(6)-dimethylallyladenosine synthase from Alcanivorax borkumensis (strain ATCC 700651 / DSM 11573 / NCIMB 13689 / SK2).